Consider the following 401-residue polypeptide: Mu-type opioid receptor (401 aa).

The Extracellular segment spans residues 1-69 (MDSSAVPANA…CPPTGSPSMI (69 aa)). Asn9, Asn12, Asn34, Asn41, and Asn49 each carry an N-linked (GlcNAc...) asparagine glycan. A helical membrane pass occupies residues 70 to 94 (TAITIMALYSIVCVVGLFGNFLVMY). The Cytoplasmic segment spans residues 95–107 (VIVRYTKMKTATN). A helical membrane pass occupies residues 108–132 (IYIFNLALADALATSTLPFQSVNYL). Residues 133–143 (MGTWPFGTILC) are Extracellular-facing. The cysteines at positions 143 and 220 are disulfide-linked. The helical transmembrane segment at 144 to 166 (KIVISIDYYNMFTSIFTLCTMSV) threads the bilayer. Residues 167–186 (DRYIAVCHPVKALDFRTPRN) lie on the Cytoplasmic side of the membrane. Residue Tyr169 is modified to Phosphotyrosine. A helical membrane pass occupies residues 187-208 (AKIINVCNWILSSAIGLPVMFM). At 209-231 (ATTKYRHGSIDCTLTFSHPTWYW) the chain is on the extracellular side. The helical transmembrane segment at 232–256 (ENLLKICVFIFAFIMPVLIITVCYG) threads the bilayer. At 257-280 (LMILRLKSVRMLSGSKEKDRNLRR) the chain is on the cytoplasmic side. Residues 281–307 (ITRMVLVVVAVFIVCWTPIHIYVIIKA) form a helical membrane-spanning segment. Topologically, residues 308 to 315 (LVTIPETT) are extracellular. Residues 316–339 (FQTVSWHFCIALGYTNSCLNPVLY) form a helical membrane-spanning segment. The NPxxY; plays a role in stabilizing the activated conformation of the receptor signature appears at 335 to 339 (NPVLY). The Cytoplasmic portion of the chain corresponds to 340–401 (AFLDENFKRC…NLEAETAPLP (62 aa)). Cys354 carries S-palmitoyl cysteine lipidation. The interval 365-388 (NSTRIRQNTRDHPSTANTVDRTNH) is disordered. A Phosphoserine modification is found at Ser366. A Phosphothreonine modification is found at Thr373. Phosphoserine is present on Ser378. Thr397 is subject to Phosphothreonine.

Belongs to the G-protein coupled receptor 1 family. In terms of assembly, forms homooligomers and heterooligomers with other GPCRs, such as OPRD1, OPRK1, OPRL1, NPFFR2, ADRA2A, SSTR2, CNR1 and CCR5 (probably in dimeric forms). Interacts with heterotrimeric G proteins; interaction with a heterotrimeric complex containing GNAI1, GNB1 and GNG2 stabilizes the active conformation of the receptor and increases its affinity for endomorphin-2, the synthetic opioid peptide DAMGO and for morphinan agonists. Interacts with PPL; the interaction disrupts agonist-mediated G-protein activation. Interacts (via C-terminus) with DNAJB4 (via C-terminus). Interacts with calmodulin; the interaction inhibits the constitutive activity of OPRM1; it abolishes basal and attenuates agonist-stimulated G-protein coupling. Interacts with FLNA, PLD2, RANBP9 and WLS and GPM6A. Interacts with RTP4. Interacts with SYP and GNAS. Interacts with RGS9, RGS17, RGS20, RGS4, PPP1R9B and HINT1. Post-translationally, phosphorylated. Differentially phosphorylated in basal and agonist-induced conditions. Agonist-mediated phosphorylation modulates receptor internalization. Phosphorylated by GRK2 in a agonist-dependent manner. Phosphorylation at Tyr-169 requires receptor activation, is dependent on non-receptor protein tyrosine kinase Src and results in a decrease in agonist efficacy by reducing G-protein coupling efficiency. Phosphorylated on tyrosine residues; the phosphorylation is involved in agonist-induced G-protein-independent receptor down-regulation. Phosphorylation at Ser-378 is involved in G-protein-dependent but not beta-arrestin-dependent activation of the ERK pathway. In terms of processing, ubiquitinated. A basal ubiquitination seems not to be related to degradation. Ubiquitination is increased upon formation of OPRM1:OPRD1 oligomers leading to proteasomal degradation; the ubiquitination is diminished by RTP4.

The protein localises to the cell membrane. Its subcellular location is the cell projection. It localises to the axon. The protein resides in the perikaryon. It is found in the dendrite. The protein localises to the endosome. In terms of biological role, receptor for endogenous opioids such as beta-endorphin and endomorphin. Receptor for natural and synthetic opioids including morphine, heroin, DAMGO, fentanyl, etorphine, buprenorphin and methadone. Also activated by enkephalin peptides, such as Met-enkephalin or Met-enkephalin-Arg-Phe, with higher affinity for Met-enkephalin-Arg-Phe. Agonist binding to the receptor induces coupling to an inactive GDP-bound heterotrimeric G-protein complex and subsequent exchange of GDP for GTP in the G-protein alpha subunit leading to dissociation of the G-protein complex with the free GTP-bound G-protein alpha and the G-protein beta-gamma dimer activating downstream cellular effectors. The agonist- and cell type-specific activity is predominantly coupled to pertussis toxin-sensitive G(i) and G(o) G alpha proteins, GNAI1, GNAI2, GNAI3 and GNAO1, and to a lesser extent to pertussis toxin-insensitive G alpha proteins GNAZ and GNA15. They mediate an array of downstream cellular responses, including inhibition of adenylate cyclase activity and both N-type and L-type calcium channels, activation of inward rectifying potassium channels, mitogen-activated protein kinase (MAPK), phospholipase C (PLC), phosphoinositide/protein kinase (PKC), phosphoinositide 3-kinase (PI3K) and regulation of NF-kappa-B. Also couples to adenylate cyclase stimulatory G alpha proteins. The selective temporal coupling to G-proteins and subsequent signaling can be regulated by RGSZ proteins, such as RGS9, RGS17 and RGS4. Phosphorylation by members of the GPRK subfamily of Ser/Thr protein kinases and association with beta-arrestins is involved in short-term receptor desensitization. Beta-arrestins associate with the GPRK-phosphorylated receptor and uncouple it from the G-protein thus terminating signal transduction. The phosphorylated receptor is internalized through endocytosis via clathrin-coated pits which involves beta-arrestins. The activation of the ERK pathway occurs either in a G-protein-dependent or a beta-arrestin-dependent manner and is regulated by agonist-specific receptor phosphorylation. Acts as a class A G-protein coupled receptor (GPCR) which dissociates from beta-arrestin at or near the plasma membrane and undergoes rapid recycling. Receptor down-regulation pathways are varying with the agonist and occur dependent or independent of G-protein coupling. Endogenous ligands induce rapid desensitization, endocytosis and recycling. Heterooligomerization with other GPCRs can modulate agonist binding, signaling and trafficking properties. Involved in neurogenesis. This chain is Mu-type opioid receptor (OPRM1), found in Pan troglodytes (Chimpanzee).